We begin with the raw amino-acid sequence, 59 residues long: Photosystem II reaction center protein K (59 aa).

A propeptide spanning residues methionine 1 to alanine 22 is cleaved from the precursor. The chain crosses the membrane as a helical span at residues methionine 38–phenylalanine 58.

The protein belongs to the PsbK family. In terms of assembly, PSII is composed of 1 copy each of membrane proteins PsbA, PsbB, PsbC, PsbD, PsbE, PsbF, PsbH, PsbI, PsbJ, PsbK, PsbL, PsbM, PsbT, PsbX, PsbY, PsbZ, Psb30/Ycf12, at least 3 peripheral proteins of the oxygen-evolving complex and a large number of cofactors. It forms dimeric complexes.

It localises to the plastid. The protein resides in the chloroplast thylakoid membrane. One of the components of the core complex of photosystem II (PSII). PSII is a light-driven water:plastoquinone oxidoreductase that uses light energy to abstract electrons from H(2)O, generating O(2) and a proton gradient subsequently used for ATP formation. It consists of a core antenna complex that captures photons, and an electron transfer chain that converts photonic excitation into a charge separation. This chain is Photosystem II reaction center protein K, found in Calycanthus floridus var. glaucus (Eastern sweetshrub).